A 386-amino-acid chain; its full sequence is Putative matrix metalloproteinase (386 aa).

A signal peptide spans 1–34; it reads MPTAHFQHSIRYLNVTNMLIFSIISFLLIYQTNS. N-linked (GlcNAc...) asparagine; by host glycans are attached at residues Asn14 and Asn58. Residue His186 coordinates Zn(2+). Residue Glu187 is part of the active site. Positions 190 and 196 each coordinate Zn(2+). A disordered region spans residues 235–258; it reads NEQSTHQSTRHRPHRRPSPDGSCR.

This sequence belongs to the peptidase M10A family. The cofactor is Zn(2+).

The chain is Putative matrix metalloproteinase from Spodoptera frugiperda (Fall armyworm).